The primary structure comprises 78 residues: Large ribosomal subunit protein bL28 (78 aa).

The disordered stretch occupies residues methionine 1–lysine 22.

Belongs to the bacterial ribosomal protein bL28 family.

This chain is Large ribosomal subunit protein bL28, found in Teredinibacter turnerae (strain ATCC 39867 / T7901).